A 507-amino-acid chain; its full sequence is MEELQGYLEIDRSRQQHFLYPLLFQEYIYALAHDHGLNGSIFYEPMENFGYDNKSSSLIVKRLITRMHQQNHLILSVNDSNESIFVGHNKNFYFQMVSEGFAVIMEIPFSLRLVSSLEEKEIAKSHNSRSIHSIFPFFEDKLSHLNHVSDILIPHPIHLEILVQTLHCWIQDAPSLHLLRFFLHEYRNSNSLITPKKSISLFSKENQRFFLLLYNSHVYECESVLVFLRKQSSHLRSTSSGTFLERTHFYGKIEHLVVVLRNDFQKTLWLFKDPFMHYVRYQGKSILASKGTHLLMKKWKSHLVHFWQCHFYLWSLPDRIHINQLYNHFLYFLGYLSSVRLNTSVVRIQMLENSFLIDTSINKFETLVPIIPLIGSVAKAKFCNVSGHPISKSVRADSSDSDIINRFGRIYRNLSHYHSGSSKKQTLYRIKYILRLSCARTLARKHKSTVRAFLKRLGSEFLEEFLTEEEQVLSLIFQRTSSPSYRSHRERIWYLDIIRINDLANHS.

Belongs to the intron maturase 2 family. MatK subfamily.

The protein localises to the plastid. It is found in the chloroplast. Usually encoded in the trnK tRNA gene intron. Probably assists in splicing its own and other chloroplast group II introns. The chain is Maturase K from Magnolia champaca (Yellow jade orchid tree).